A 152-amino-acid polypeptide reads, in one-letter code: Large ribosomal subunit protein uL13 (152 aa).

The protein belongs to the universal ribosomal protein uL13 family. Part of the 50S ribosomal subunit.

In terms of biological role, this protein is one of the early assembly proteins of the 50S ribosomal subunit, although it is not seen to bind rRNA by itself. It is important during the early stages of 50S assembly. This is Large ribosomal subunit protein uL13 from Neorickettsia sennetsu (strain ATCC VR-367 / Miyayama) (Ehrlichia sennetsu).